Reading from the N-terminus, the 527-residue chain is Mitochondrial substrate carrier family protein V (527 aa).

Positions 1-14 are enriched in basic and acidic residues; it reads MNSSDFKKSFKEST. Residues 1–29 form a disordered region; sequence MNSSDFKKSFKESTENNSNTYRPSKTLNT. Residues 1 to 132 lie on the Mitochondrial intermembrane side of the membrane; the sequence is MNSSDFKKSF…VSKKSISKEN (132 aa). Residues 15–29 are compositionally biased toward polar residues; it reads ENNSNTYRPSKTLNT. 3 Solcar repeats span residues 130 to 220, 253 to 345, and 430 to 519; these read KENV…CKKH, MTVP…FKII, and VNMI…CKDL. Residues 133 to 153 form a helical membrane-spanning segment; sequence VNYLVSGSIAGAISRSATAGF. Residues 154–187 are Mitochondrial matrix-facing; that stretch reads ERLTIIQQVQGMSQNLSQGYVGCIAAMKEMVKRE. The chain crosses the membrane as a helical span at residues 188–208; that stretch reads GFKSIWKGNGANIVKVSPNSG. The Mitochondrial intermembrane portion of the chain corresponds to 209 to 258; sequence IRFLTYEFCKKHFLDNSSNHPSSSSIENGIDGNGVGCGSGSEMKMTVPQT. A helical transmembrane segment spans residues 259 to 279; sequence MFSGAMAGLTSTFFTYPLDVV. Residues 280–324 lie on the Mitochondrial matrix side of the membrane; the sequence is RIRLSLQGSCSNDYAAHRYNGITHSFFKIHKDEGVKGLYKGLGTS. A helical membrane pass occupies residues 325-345; sequence IASIVPWVSISFATYEGFKII. The Mitochondrial intermembrane segment spans residues 346–435; sequence CKKMILNYQI…LKKGVNMICD (90 aa). A helical transmembrane segment spans residues 436-456; sequence FVCGALSGAVTMTVCYPLDVL. Topologically, residues 457 to 487 are mitochondrial matrix; the sequence is RRRMMIQGIGGNKVLYKNGWDATKKILSNEG. Residues 488–508 traverse the membrane as a helical segment; sequence LVAFYHGIIPAYFKVVPTVAI. Topologically, residues 509–527 are mitochondrial intermembrane; the sequence is SFAVYEICKDLGSNKYQQK.

Belongs to the mitochondrial carrier (TC 2.A.29) family.

The protein resides in the mitochondrion inner membrane. Its function is as follows. Mitochondrial solute carriers shuttle metabolites, nucleotides, and cofactors through the mitochondrial inner membrane. In Dictyostelium discoideum (Social amoeba), this protein is Mitochondrial substrate carrier family protein V (mcfV).